The primary structure comprises 511 residues: MKKRALVSVSDKTGVVEFVKGLLEQGIEVISTGGTKKLLEENGLQVIGISEVTGFPEIMDGRVKTLHPNIHGGLLAVRDNETHVAQMNELGMEPIDFVVVNLYPFKETIAKPDVTFADAIENIDIGGPTMIRSAAKNHKFVSVIVDPVDYDVVLAELKENGEVAEETKRKLAAKVFRHTAAYDALISNYLTEQMGEESPETLTVTFEKKQDLRYGENPHQKATFYKAPFAATSSVAYAEQLHGKELSYNNINDADAALSIVKEFTEPAVVAVKHMNPCGVGVGTDIHEAYTRAYEADPVSIFGGIIAANREIDKATAEKLHEIFLEIIIAPSFSKEALEVLQSKKNLRLLTVNIEKATSASKKLTSVQGGLLVQEEDTLSLDESTISIPTKREPSEQEWKDLKLAWKVVKHVKSNAIVLAKDDMTIGVGAGQMNRVGSAKIAITQAGEKAQGSALASDAFFPMPDTVEEAAKAGITAIIQPGGSIRDEDSIKVADTYGIAMVFTGVRHFKH.

Residues 1-145 (MKKRALVSVS…KNHKFVSVIV (145 aa)) enclose the MGS-like domain.

It belongs to the PurH family.

It catalyses the reaction (6R)-10-formyltetrahydrofolate + 5-amino-1-(5-phospho-beta-D-ribosyl)imidazole-4-carboxamide = 5-formamido-1-(5-phospho-D-ribosyl)imidazole-4-carboxamide + (6S)-5,6,7,8-tetrahydrofolate. The enzyme catalyses IMP + H2O = 5-formamido-1-(5-phospho-D-ribosyl)imidazole-4-carboxamide. Its pathway is purine metabolism; IMP biosynthesis via de novo pathway; 5-formamido-1-(5-phospho-D-ribosyl)imidazole-4-carboxamide from 5-amino-1-(5-phospho-D-ribosyl)imidazole-4-carboxamide (10-formyl THF route): step 1/1. It functions in the pathway purine metabolism; IMP biosynthesis via de novo pathway; IMP from 5-formamido-1-(5-phospho-D-ribosyl)imidazole-4-carboxamide: step 1/1. In Bacillus anthracis (strain A0248), this protein is Bifunctional purine biosynthesis protein PurH.